A 373-amino-acid polypeptide reads, in one-letter code: Eukaryotic translation initiation factor 3 subunit M (373 aa).

Serine 2 carries the N-acetylserine modification. A phosphoserine mark is found at serine 2 and serine 152. The PCI domain maps to 180–338 (AASKVMVELL…RKVVVSHSTH (159 aa)). Lysine 253 is modified (N6-acetyllysine). Residue serine 366 is modified to Phosphoserine.

Belongs to the eIF-3 subunit M family. As to quaternary structure, component of the eukaryotic translation initiation factor 3 (eIF-3) complex, which is composed of 13 subunits: EIF3A, EIF3B, EIF3C, EIF3D, EIF3E, EIF3F, EIF3G, EIF3H, EIF3I, EIF3J, EIF3K, EIF3L and EIF3M. The eIF-3 complex appears to include 3 stable modules: module A is composed of EIF3A, EIF3B, EIF3G and EIF3I; module B is composed of EIF3F, EIF3H, and EIF3M; and module C is composed of EIF3C, EIF3D, EIF3E, EIF3K and EIF3L. EIF3C of module C binds EIF3B of module A and EIF3H of module B, thereby linking the three modules. EIF3J is a labile subunit that binds to the eIF-3 complex via EIF3B. The eIF-3 complex interacts with RPS6KB1 under conditions of nutrient depletion. Mitogenic stimulation leads to binding and activation of a complex composed of MTOR and RPTOR, leading to phosphorylation and release of RPS6KB1 and binding of EIF4B to eIF-3.

Its subcellular location is the cytoplasm. In terms of biological role, component of the eukaryotic translation initiation factor 3 (eIF-3) complex, which is required for several steps in the initiation of protein synthesis. The eIF-3 complex associates with the 40S ribosome and facilitates the recruitment of eIF-1, eIF-1A, eIF-2:GTP:methionyl-tRNAi and eIF-5 to form the 43S pre-initiation complex (43S PIC). The eIF-3 complex stimulates mRNA recruitment to the 43S PIC and scanning of the mRNA for AUG recognition. The eIF-3 complex is also required for disassembly and recycling of post-termination ribosomal complexes and subsequently prevents premature joining of the 40S and 60S ribosomal subunits prior to initiation. The eIF-3 complex specifically targets and initiates translation of a subset of mRNAs involved in cell proliferation, including cell cycling, differentiation and apoptosis, and uses different modes of RNA stem-loop binding to exert either translational activation or repression. The protein is Eukaryotic translation initiation factor 3 subunit M of Bos taurus (Bovine).